We begin with the raw amino-acid sequence, 619 residues long: DBH-like monooxygenase protein 2 (619 aa).

A signal peptide spans 1 to 21; the sequence is MACVLLFRLFLLLVLAAFSQG. Residues 22–594 are Extracellular-facing; it reads KRLGPTSPLR…LSGSNTATLR (573 aa). Residues 40–156 form the DOMON domain; it reads RAVFLRWDFD…DTMRVLAAYG (117 aa). Y209 is a catalytic residue. Intrachain disulfides connect C211-C261 and C248-C271. Residues H241 and H242 each contribute to the Cu cation site. N250 is a glycosylation site (N-linked (GlcNAc...) asparagine). H309, H390, and H392 together coordinate Cu cation. Cystine bridges form between C366-C481 and C444-C466. H390 is a catalytic residue. N405 carries an N-linked (GlcNAc...) asparagine glycan. M465 is a Cu cation binding site. N-linked (GlcNAc...) asparagine glycosylation occurs at N477. The helical transmembrane segment at 595-615 threads the bilayer; it reads PLPMIAVLFLQGSLSCLLAML. The Cytoplasmic segment spans residues 616 to 619; it reads QTGV.

The protein belongs to the copper type II ascorbate-dependent monooxygenase family. The cofactor is Cu(2+). As to expression, expressed at low levels in thymus and testis.

Its subcellular location is the membrane. In Mus musculus (Mouse), this protein is DBH-like monooxygenase protein 2 (Moxd2).